Consider the following 422-residue polypeptide: Metallocarboxypeptidase A-like protein TRV_02598 (422 aa).

A signal peptide spans Met1–Gly16. Residues Gly17–Asn119 constitute a propeptide, activation peptide. The region spanning Ser125–Leu421 is the Peptidase M14 domain. Residues His185 and Glu188 each coordinate Zn(2+). Substrate contacts are provided by residues His185–Glu188, Arg240, and Asn256–Arg257. Cys250 and Cys273 are disulfide-bonded. His311 lines the Zn(2+) pocket. Ser312–Tyr313 is a binding site for substrate. Glu387 (proton donor/acceptor) is an active-site residue.

It belongs to the peptidase M14 family. The cofactor is Zn(2+).

It is found in the secreted. Extracellular metalloprotease that contributes to pathogenicity. This chain is Metallocarboxypeptidase A-like protein TRV_02598, found in Trichophyton verrucosum (strain HKI 0517).